Reading from the N-terminus, the 292-residue chain is MSRAQSSPTVIQWVIDTHPLWPSALKTKDLTSAASRALSLLTEEEQSSVLRYYHVRDAKLALASALLKRYAISRFCHVPWFQAKTTRDSRTKPVFVLPSGDEPLIFNVSHQAGLAVFLAVRDPPKGLAVGVDVVCPSERRDRDLSSLEEDGWASFVDIHADVFGAGEVSALKSMNPVPTVQGRDRALRYFYALWCLREAYVKMTGDALLASWLKDLEMHKFAPPEDMKEAQEVRLRGKKVEGVDVRLMPLLEEYMVSTAIRNGDNGERVELGEFQSLDMEEILAFGEKASKP.

Belongs to the P-Pant transferase superfamily.

It catalyses the reaction apo-[ACP] + CoA = holo-[ACP] + adenosine 3',5'-bisphosphate + H(+). Transfers the 4'-phosphopantetheine moiety from coenzyme A to a Ser of an acyl-carrier-protein. The enzyme is able to transfer the cofactor to a broad range of enzymes with acyl- or peptidyl-carrier protein domains. Required for primary biological processes such as growth and asexual/sexual development, and activates target enzymes involved in the synthesis of metabolites such as fatty acids, nonribosomal peptides and polyketides such as the gamma-pyrones fusapyrone (FPY) and deoxyfusapyrone (dFPY). This chain is 4'-phosphopantetheinyl transferase 1, found in Fusarium mangiferae (Mango malformation disease fungus).